The primary structure comprises 547 residues: Chaperonin GroEL (547 aa).

ATP contacts are provided by residues 30–33 (TLGP), Lys51, 87–91 (DGTTT), Gly415, 479–481 (NAA), and Asp495. The interval 525–547 (PKEDSPGAGAGMGGMGGMGGMDM) is disordered. Over residues 532–547 (AGAGMGGMGGMGGMDM) the composition is skewed to gly residues.

This sequence belongs to the chaperonin (HSP60) family. Forms a cylinder of 14 subunits composed of two heptameric rings stacked back-to-back. Interacts with the co-chaperonin GroES.

It localises to the cytoplasm. It carries out the reaction ATP + H2O + a folded polypeptide = ADP + phosphate + an unfolded polypeptide.. In terms of biological role, together with its co-chaperonin GroES, plays an essential role in assisting protein folding. The GroEL-GroES system forms a nano-cage that allows encapsulation of the non-native substrate proteins and provides a physical environment optimized to promote and accelerate protein folding. The protein is Chaperonin GroEL of Nitrosomonas eutropha (strain DSM 101675 / C91 / Nm57).